The primary structure comprises 401 residues: Beta-ketoadipyl-CoA thiolase (401 aa).

Cys90 functions as the Acyl-thioester intermediate in the catalytic mechanism. Catalysis depends on proton acceptor residues His357 and Cys387.

This sequence belongs to the thiolase-like superfamily. Thiolase family.

It catalyses the reaction succinyl-CoA + acetyl-CoA = 3-oxoadipyl-CoA + CoA. It participates in aromatic compound metabolism; beta-ketoadipate pathway; acetyl-CoA and succinyl-CoA from 3-oxoadipate: step 2/2. Its function is as follows. Catalyzes thiolytic cleavage of beta-ketoadipyl-CoA to succinyl-CoA and acetyl-CoA. The chain is Beta-ketoadipyl-CoA thiolase (pcaF) from Acinetobacter baylyi (strain ATCC 33305 / BD413 / ADP1).